Reading from the N-terminus, the 382-residue chain is Pyruvate dehydrogenase E1 component subunit beta, mitochondrial (382 aa).

The N-terminal 46 residues, 1–46, are a transit peptide targeting the mitochondrion; it reads MSRFLRPAFRLATTATRASTIRPTPSSLITKAAAVPTTRLLQKRSY. Glu112 contacts thiamine diphosphate. Ile165, Ala213, Ile214, Asp216, and Asn218 together coordinate K(+).

As to quaternary structure, eukaryotic pyruvate dehydrogenase (PDH) complexes are organized as a core consisting of the oligomeric dihydrolipoamide acetyl-transferase (E2), around which are arranged multiple copies of pyruvate dehydrogenase (E1), dihydrolipoamide dehydrogenase (E3) and protein X (E3BP) bound by non-covalent bonds. The Chaetomium thermophilum PDH complex contains 60 E2 units, 12 E3BP units, about 20 E1 units, and 12 or more E3 units. The units are organized in 1 E2 60-mer, 4 E3BP trimers, about 20 E1 tetramers, and a maximum of 12 E3 dimers. Pyruvate dehydrogenase (E1) is active as a tetramer of 2 alpha and 2 beta subunits. The E3BP trimers are bound inside the icosahedral core with tetrahedral symmetry. Thiamine diphosphate is required as a cofactor.

Its subcellular location is the mitochondrion. It catalyses the reaction N(6)-[(R)-lipoyl]-L-lysyl-[protein] + pyruvate + H(+) = N(6)-[(R)-S(8)-acetyldihydrolipoyl]-L-lysyl-[protein] + CO2. In terms of biological role, the 10-megadalton pyruvate dehydrogenase complex contains multiple copies of three enzymatic components: pyruvate dehydrogenase (E1), dihydrolipoamide acetyltransferase (E2) and lipoamide dehydrogenase (E3) and catalyzes the overall oxidative decarboxylation of pyruvate to form acetyl-CoA and CO(2). Within the complex, pyruvate and thiamine pyrophosphate (TPP or vitamin B1) are bound by pyruvate dehydrogenase E1 subunits alpha and beta and pyruvate is decarboxylated leading to the 2-carbon hydrohyethyl bound to TPP. The E2 component contains covalently-bound lipoyl cofactors and transfers the hydroxyethyl group from TPP to an oxidized form of covalently bound lipoamide, and the resulting acetyl group is then transferred to free coenzyme A to form acetyl-CoA and reduced dihydrolipoamide-E2. Finally, the flavoprotein dihydrolipoamide dehydrogenase (E3) re-oxidizes the lipoyl group of dihydrolipoamide-E2 to form lipoamide-E2 and NADH. A fourth subunit, E3BP, is responsible for tethering E3 in proximity to the core, forming the entire metabolon. The sequence is that of Pyruvate dehydrogenase E1 component subunit beta, mitochondrial from Chaetomium thermophilum (strain DSM 1495 / CBS 144.50 / IMI 039719) (Thermochaetoides thermophila).